A 575-amino-acid chain; its full sequence is Alpha-(1,6)-fucosyltransferase (575 aa).

At 1–9 (MRPWTGSWR) the chain is on the cytoplasmic side. The helical; Signal-anchor for type II membrane protein transmembrane segment at 10 to 30 (WIMLILFAWGTLLFYIGGHLV) threads the bilayer. Residues 31–575 (RDNDHPDHSS…KYPTYPEAEK (545 aa)) are Lumenal-facing. 3 cysteine pairs are disulfide-bonded: C204–C266, C212–C230, and C218–C222. A GT23 domain is found at 206 to 493 (KAKKLVCNIN…PDASANFHSL (288 aa)). S278 is subject to Phosphoserine. An SH3-binding motif is present at residues 299 to 305 (PRPPYLP). An important for donor substrate binding region spans residues 365–366 (RR). C465 and C472 are disulfide-bonded. The SH3 domain occupies 502-563 (QNAHNQIAIY…PSYKVREKIE (62 aa)).

The protein belongs to the glycosyltransferase 23 family. Tyrosine phosphorylated by PKDCC/VLK.

Its subcellular location is the golgi apparatus. It localises to the golgi stack membrane. It carries out the reaction N(4)-{beta-D-GlcNAc-(1-&gt;2)-alpha-D-Man-(1-&gt;3)-[beta-D-GlcNAc-(1-&gt;2)-alpha-D-Man-(1-&gt;6)]-beta-D-Man-(1-&gt;4)-beta-D-GlcNAc-(1-&gt;4)-beta-D-GlcNAc}-L-asparaginyl-[protein] + GDP-beta-L-fucose = an N(4)-{beta-D-GlcNAc-(1-&gt;2)-alpha-D-Man-(1-&gt;3)-[beta-D-GlcNAc-(1-&gt;2)-alpha-D-Man-(1-&gt;6)]-beta-D-Man-(1-&gt;4)-beta-D-GlcNAc-(1-&gt;4)-[alpha-L-Fuc-(1-&gt;6)]-beta-D-GlcNAc}-L-asparaginyl-[protein] + GDP + H(+). It participates in protein modification; protein glycosylation. In terms of biological role, catalyzes the addition of fucose in alpha 1-6 linkage to the first GlcNAc residue, next to the peptide chains in N-glycans. The polypeptide is Alpha-(1,6)-fucosyltransferase (FUT8) (Canis lupus familiaris (Dog)).